The chain runs to 183 residues: Porphobilinogen deaminase (183 aa).

This sequence belongs to the HMBS family. Monomer. Dipyrromethane serves as cofactor.

It catalyses the reaction 4 porphobilinogen + H2O = hydroxymethylbilane + 4 NH4(+). The protein operates within porphyrin-containing compound metabolism; protoporphyrin-IX biosynthesis; coproporphyrinogen-III from 5-aminolevulinate: step 2/4. Its function is as follows. Tetrapolymerization of the monopyrrole PBG into the hydroxymethylbilane pre-uroporphyrinogen in several discrete steps. This Yersinia intermedia protein is Porphobilinogen deaminase (hemC).